Consider the following 431-residue polypeptide: Enolase (431 aa).

Position 163 (Gln163) interacts with (2R)-2-phosphoglycerate. The active-site Proton donor is the Glu205. 3 residues coordinate Mg(2+): Asp242, Glu288, and Asp315. 4 residues coordinate (2R)-2-phosphoglycerate: Lys340, Arg369, Ser370, and Lys391. Lys340 (proton acceptor) is an active-site residue.

Belongs to the enolase family. It depends on Mg(2+) as a cofactor.

Its subcellular location is the cytoplasm. The protein resides in the secreted. It is found in the cell surface. The enzyme catalyses (2R)-2-phosphoglycerate = phosphoenolpyruvate + H2O. Its pathway is carbohydrate degradation; glycolysis; pyruvate from D-glyceraldehyde 3-phosphate: step 4/5. Its function is as follows. Catalyzes the reversible conversion of 2-phosphoglycerate (2-PG) into phosphoenolpyruvate (PEP). It is essential for the degradation of carbohydrates via glycolysis. The protein is Enolase of Bacillus anthracis (strain A0248).